The chain runs to 149 residues: Ribosome-binding factor A (149 aa).

Belongs to the RbfA family. As to quaternary structure, monomer. Binds 30S ribosomal subunits, but not 50S ribosomal subunits or 70S ribosomes.

It is found in the cytoplasm. Its function is as follows. One of several proteins that assist in the late maturation steps of the functional core of the 30S ribosomal subunit. Associates with free 30S ribosomal subunits (but not with 30S subunits that are part of 70S ribosomes or polysomes). Required for efficient processing of 16S rRNA. May interact with the 5'-terminal helix region of 16S rRNA. The protein is Ribosome-binding factor A of Caulobacter vibrioides (strain ATCC 19089 / CIP 103742 / CB 15) (Caulobacter crescentus).